The primary structure comprises 146 residues: 3-hydroxyacyl-[acyl-carrier-protein] dehydratase FabZ (146 aa).

Residue His49 is part of the active site.

The protein belongs to the thioester dehydratase family. FabZ subfamily.

It localises to the cytoplasm. The catalysed reaction is a (3R)-hydroxyacyl-[ACP] = a (2E)-enoyl-[ACP] + H2O. Involved in unsaturated fatty acids biosynthesis. Catalyzes the dehydration of short chain beta-hydroxyacyl-ACPs and long chain saturated and unsaturated beta-hydroxyacyl-ACPs. The sequence is that of 3-hydroxyacyl-[acyl-carrier-protein] dehydratase FabZ from Pseudomonas savastanoi pv. phaseolicola (strain 1448A / Race 6) (Pseudomonas syringae pv. phaseolicola (strain 1448A / Race 6)).